Here is a 368-residue protein sequence, read N- to C-terminus: Galanin receptor type 3 (368 aa).

Residues 1–20 are Extracellular-facing; the sequence is MADAQNISLDSPGSVGAVAV. The N-linked (GlcNAc...) asparagine glycan is linked to N6. Residues 21 to 41 traverse the membrane as a helical segment; the sequence is PVVFALIFLLGTVGNGLVLAV. Residues 42–57 lie on the Cytoplasmic side of the membrane; the sequence is LLQPGPSAWQEPGSTT. Residues 58 to 78 traverse the membrane as a helical segment; it reads DLFILNLAVADLCFILCCVPF. Residues 79–96 are Extracellular-facing; it reads QATIYTLDAWLFGALVCK. An intrachain disulfide couples C95 to C172. Residues 97 to 118 form a helical membrane-spanning segment; it reads AVHLLIYLTMYASSFTLAAVSV. Over 119 to 138 the chain is Cytoplasmic; that stretch reads DRYLAVRHPLRSRALRTPRN. A helical transmembrane segment spans residues 139-159; the sequence is ARAAVGLVWLLAALFSAPYLS. Over 160-184 the chain is Extracellular; sequence YYGTVRYGALELCVPAWEDARRRAL. The helical transmembrane segment at 185 to 205 threads the bilayer; the sequence is DVATFAAGYLLPVAVVSLAYG. At 206 to 236 the chain is on the cytoplasmic side; sequence RTLRFLWAAVGPAGAAAAEARRRATGRAGRA. The helical transmembrane segment at 237 to 257 threads the bilayer; it reads MLAVAALYALCWGPHHALILC. Over 258–259 the chain is Extracellular; the sequence is FW. The helical transmembrane segment at 260-280 threads the bilayer; the sequence is YGRFAFSPATYACRLASHCLA. At 281-368 the chain is on the cytoplasmic side; sequence YANSCLNPLV…HGGEAARGPE (88 aa). A lipid anchor (S-palmitoyl cysteine) is attached at C308. Residues 317–368 form a disordered region; sequence RRALRRVRPASSGPPGCPGDARPSGRLLAGGGQGPEPREGPVHGGEAARGPE.

This sequence belongs to the G-protein coupled receptor 1 family.

It localises to the cell membrane. Its function is as follows. Receptor for the hormone galanin. Receptor for the hormone spexin-1. The protein is Galanin receptor type 3 (GALR3) of Homo sapiens (Human).